A 63-amino-acid chain; its full sequence is Bowman-birk type proteinase inhibitor (63 aa).

Intrachain disulfides connect Cys7–Cys61, Cys8–Cys23, Cys11–Cys57, Cys13–Cys21, Cys31–Cys38, Cys35–Cys50, and Cys40–Cys48.

Inhibits trypsin, chymotrypsin, plasmin and factor XIIa. Does not inhibit factor Xa, thrombin and plasma kallikrein. This chain is Bowman-birk type proteinase inhibitor, found in Amburana acreana (Cerejeira).